The sequence spans 275 residues: Elongation factor Ts (275 aa).

An involved in Mg(2+) ion dislocation from EF-Tu region spans residues 80 to 83 (TDFV).

It belongs to the EF-Ts family.

It is found in the cytoplasm. Functionally, associates with the EF-Tu.GDP complex and induces the exchange of GDP to GTP. It remains bound to the aminoacyl-tRNA.EF-Tu.GTP complex up to the GTP hydrolysis stage on the ribosome. The chain is Elongation factor Ts from Kineococcus radiotolerans (strain ATCC BAA-149 / DSM 14245 / SRS30216).